Consider the following 155-residue polypeptide: MSLVKLANTCAHLQNCSKVRVALTSIPYTKLQLQFAYNLYQQGFLSSLQKGSTMGPDKDFVEVTPDNISTRRLWVGLKYRDNKPVLSSCKLISKPNSRIHLPMEDMKKLCSGVTIRNIKPLQPGELILVRAHNNIMDINEAISKKLDGEVLCRVK.

The protein belongs to the universal ribosomal protein uS8 family. As to quaternary structure, component of the mitochondrial small ribosomal subunit (mt-SSU). Mature yeast 74S mitochondrial ribosomes consist of a small (37S) and a large (54S) subunit. The 37S small subunit contains a 15S ribosomal RNA (15S mt-rRNA) and 34 different proteins. The 54S large subunit contains a 21S rRNA (21S mt-rRNA) and 46 different proteins.

The protein resides in the mitochondrion. Functionally, component of the mitochondrial ribosome (mitoribosome), a dedicated translation machinery responsible for the synthesis of mitochondrial genome-encoded proteins, including at least some of the essential transmembrane subunits of the mitochondrial respiratory chain. The mitoribosomes are attached to the mitochondrial inner membrane and translation products are cotranslationally integrated into the membrane. This Saccharomyces cerevisiae (strain ATCC 204508 / S288c) (Baker's yeast) protein is Small ribosomal subunit protein uS8m (MRPS8).